The chain runs to 309 residues: Minor serine/threonine-protein phosphatase PP2A-1 catalytic subunit (309 aa).

Residues Asp57, His59, Asp85, and Asn117 each contribute to the Mn(2+) site. His118 (proton donor) is an active-site residue. 2 residues coordinate Mn(2+): His167 and His241. A Leucine methyl ester modification is found at Leu309.

It belongs to the PPP phosphatase family. PP-2A subfamily. Requires Mn(2+) as cofactor.

It catalyses the reaction O-phospho-L-seryl-[protein] + H2O = L-seryl-[protein] + phosphate. It carries out the reaction O-phospho-L-threonyl-[protein] + H2O = L-threonyl-[protein] + phosphate. Its function is as follows. Essential role in cell cycle control. PP2A may be involved in controlling the entry into mitosis, possibly acting as an inhibitor. In Schizosaccharomyces pombe (strain 972 / ATCC 24843) (Fission yeast), this protein is Minor serine/threonine-protein phosphatase PP2A-1 catalytic subunit (ppa1).